Consider the following 644-residue polypeptide: Tripeptidyl-peptidase sed1 (644 aa).

The signal sequence occupies residues 1 to 18 (MRLSHVLLGTAAAAGVLA). A propeptide spans 19–196 (SPTPNDYVVH…KARSIEKRSF (178 aa)) (removed in mature form). Residues 224–643 (AITPLCISAL…PALLDLFMSL (420 aa)) form the Peptidase S53 domain. An N-linked (GlcNAc...) asparagine glycan is attached at asparagine 235. Residues glutamate 300 and aspartate 304 each act as charge relay system in the active site. N-linked (GlcNAc...) asparagine glycans are attached at residues asparagine 326, asparagine 332, and asparagine 519. Catalysis depends on serine 561, which acts as the Charge relay system. Residues aspartate 602, isoleucine 603, glycine 621, and aspartate 623 each coordinate Ca(2+).

Requires Ca(2+) as cofactor. In terms of processing, N-glycosylated.

It is found in the secreted. The protein localises to the extracellular space. It carries out the reaction Release of an N-terminal tripeptide from a polypeptide.. Its function is as follows. Secreted tripeptidyl-peptidase which degrades proteins at acidic pHs and is involved in virulence. This is Tripeptidyl-peptidase sed1 (sed1) from Aspergillus fumigatus (strain ATCC MYA-4609 / CBS 101355 / FGSC A1100 / Af293) (Neosartorya fumigata).